The sequence spans 440 residues: MKLLHLIFLLALTTGISAVLIYIIGVSNLYESNRFTNEDLEALQSLQNGFQKCVSANGLGLQAAMGRDYCKVSINFPKDTVPKWKDPKSGELEGLSYEFDLCEAVATWEQVRNSSTILTKEYIDALPNGWEDYAWRRINKGIQLNRCQNKSLCIEKLSLVLPETPPYFPRQFGRCAVIGNSGDLLKTKFGKEIDTYDTVLRENGAPIQNYKEYVGEKSTFRLLNRGSAKALDKVVELDEKKQEVLLVKTTIHDIMNKMIREVPIKNPVYLMLGASFGSAAKGTGLKALEFALSTCDSVDMYGFTVDPGYKEWTRYFSESRQGHTPLHGRAYYQMMECLGLIKIHSPMRADPNRVVKWVPSRSTIRSARIAAEKLLRRVGAGSADPLASCSIVKKRNKNKRPMVSHLRKPVSDHQKFVRSTSMYPVEHSPGHGQLCITPAD.

Topologically, residues 1-5 are cytoplasmic; the sequence is MKLLH. The helical; Signal-anchor for type II membrane protein transmembrane segment at 6-26 threads the bilayer; the sequence is LIFLLALTTGISAVLIYIIGV. Over 27-440 the chain is Lumenal; the sequence is SNLYESNRFT…HGQLCITPAD (414 aa). Residues asparagine 113 and asparagine 149 are each glycosylated (N-linked (GlcNAc...) asparagine).

This sequence belongs to the glycosyltransferase 29 family.

The protein localises to the golgi apparatus membrane. May be involved in the transfer of 2-keto-3-deoxy-D-lyxo-heptulosaric acid (Dha) and/or 2-keto-3-deoxy-D-manno-octulosonic acid (Kdo) on the homogalacturonan backbone of rhamnogalacturonan-II. Required for efficient pollen grain germination and pollen tube elongation. Does not possess sialyltransferase activity in vitro. The chain is Sialyltransferase-like protein 2 from Arabidopsis thaliana (Mouse-ear cress).